Consider the following 120-residue polypeptide: Large ribosomal subunit protein uL18 (120 aa).

This sequence belongs to the universal ribosomal protein uL18 family. In terms of assembly, part of the 50S ribosomal subunit; part of the 5S rRNA/L5/L18/L25 subcomplex. Contacts the 5S and 23S rRNAs.

In terms of biological role, this is one of the proteins that bind and probably mediate the attachment of the 5S RNA into the large ribosomal subunit, where it forms part of the central protuberance. This Rhizobium leguminosarum bv. trifolii (strain WSM2304) protein is Large ribosomal subunit protein uL18.